The chain runs to 200 residues: LIM domain-containing protein WLIM2a (200 aa).

LIM zinc-binding domains follow at residues glutamine 8–glutamate 68 and aspartate 107–glutamate 167.

Interacts with F-actin. As to expression, expressed in roots, leaves, stems, flowers and siliques. Barely detected in pollen.

It localises to the cytoplasm. The protein localises to the cytoskeleton. Binds to actin filaments and promotes cross-linking into thick bundles. Has an actin-stabilizing activity. The actin regulatory activities are not regulated by pH and [Ca(2+)]. This chain is LIM domain-containing protein WLIM2a, found in Arabidopsis thaliana (Mouse-ear cress).